Reading from the N-terminus, the 416-residue chain is MAYLFTSESVSEGHPDKVADQISDALIDNFLAFDADSKVACETLVTTGQVILAGEVKSNTYLDVQQIAREVIRKIGYTKSEYMFEANSCGILSAIHEQSADINQGVDRAKPEEQGAGDQGMMFGYATNETENFMPLALDLSHKLLQELAILRRENKEITYLRPDAKSQVTLEYSDDNKPTRIDAIVISTQHDDFDEEAAMLAKIKKDVIEILIPRIIAKNPEHAHLFNDKINYHINPTGKFVIGGPHGDTGLTGRKIIVDTYGGKGAHGGGAFSGKDPSKVDRSAAYATRHIAKNLVAAGVADEILVQVSYAIGVAEPMGIFIETYGTSKVNLTNGEIAKKVEAIFDMRPYFIEQRLKLRNPIYSETAAYGHMGRKPETVTKTFSAPGGNEKTVTVELFTWEKLDFVDQVKTAFGL.

Histidine 14 contributes to the ATP binding site. Residue aspartate 16 coordinates Mg(2+). Glutamate 42 provides a ligand contact to K(+). The L-methionine site is built by glutamate 55 and glutamine 98. Residues 98–108 (QSADINQGVDR) are flexible loop. ATP contacts are provided by residues 164 to 166 (DAK), 240 to 241 (KF), aspartate 249, 255 to 256 (RK), alanine 272, and lysine 276. Position 249 (aspartate 249) interacts with L-methionine. Residue lysine 280 coordinates L-methionine.

It belongs to the AdoMet synthase family. As to quaternary structure, homotetramer; dimer of dimers. The cofactor is Mg(2+). K(+) is required as a cofactor.

Its subcellular location is the cytoplasm. The catalysed reaction is L-methionine + ATP + H2O = S-adenosyl-L-methionine + phosphate + diphosphate. The protein operates within amino-acid biosynthesis; S-adenosyl-L-methionine biosynthesis; S-adenosyl-L-methionine from L-methionine: step 1/1. Its function is as follows. Catalyzes the formation of S-adenosylmethionine (AdoMet) from methionine and ATP. The overall synthetic reaction is composed of two sequential steps, AdoMet formation and the subsequent tripolyphosphate hydrolysis which occurs prior to release of AdoMet from the enzyme. This Flavobacterium johnsoniae (strain ATCC 17061 / DSM 2064 / JCM 8514 / BCRC 14874 / CCUG 350202 / NBRC 14942 / NCIMB 11054 / UW101) (Cytophaga johnsonae) protein is S-adenosylmethionine synthase.